A 74-amino-acid polypeptide reads, in one-letter code: Large ribosomal subunit protein bL31 (74 aa).

It belongs to the bacterial ribosomal protein bL31 family. Type A subfamily. As to quaternary structure, part of the 50S ribosomal subunit.

Functionally, binds the 23S rRNA. This is Large ribosomal subunit protein bL31 from Synechococcus sp. (strain JA-2-3B'a(2-13)) (Cyanobacteria bacterium Yellowstone B-Prime).